The primary structure comprises 109 residues: Nucleoid-associated protein Sama_1311 (109 aa).

The protein belongs to the YbaB/EbfC family. As to quaternary structure, homodimer.

It localises to the cytoplasm. The protein localises to the nucleoid. Binds to DNA and alters its conformation. May be involved in regulation of gene expression, nucleoid organization and DNA protection. This is Nucleoid-associated protein Sama_1311 from Shewanella amazonensis (strain ATCC BAA-1098 / SB2B).